We begin with the raw amino-acid sequence, 423 residues long: NADP-specific glutamate dehydrogenase (423 aa).

Lys112 is an active-site residue.

It belongs to the Glu/Leu/Phe/Val dehydrogenases family. Homohexamer.

The enzyme catalyses L-glutamate + NADP(+) + H2O = 2-oxoglutarate + NH4(+) + NADPH + H(+). The polypeptide is NADP-specific glutamate dehydrogenase (gdhA) (Saccharolobus shibatae (strain ATCC 51178 / DSM 5389 / JCM 8931 / NBRC 15437 / B12) (Sulfolobus shibatae)).